We begin with the raw amino-acid sequence, 749 residues long: Chaperone protein dnaK3 (749 aa).

Threonine 198 carries the post-translational modification Phosphothreonine; by autocatalysis. Basic and acidic residues-rich tracts occupy residues 643–653, 661–694, and 711–724; these read RWDADPWDRSR, YDDR…RDRN, and PTWE…RDRS. A disordered region spans residues 643-749; it reads RWDADPWDRS…GWDDDDDEWF (107 aa). Acidic residues predominate over residues 740-749; the sequence is GWDDDDDEWF.

The protein belongs to the heat shock protein 70 family.

Acts as a chaperone. In Synechococcus elongatus (strain ATCC 33912 / PCC 7942 / FACHB-805) (Anacystis nidulans R2), this protein is Chaperone protein dnaK3 (dnaK3).